The primary structure comprises 115 residues: Large ribosomal subunit protein bL19 (115 aa).

Belongs to the bacterial ribosomal protein bL19 family.

Functionally, this protein is located at the 30S-50S ribosomal subunit interface and may play a role in the structure and function of the aminoacyl-tRNA binding site. In Thermotoga maritima (strain ATCC 43589 / DSM 3109 / JCM 10099 / NBRC 100826 / MSB8), this protein is Large ribosomal subunit protein bL19 (rplS).